A 450-amino-acid polypeptide reads, in one-letter code: Gastrin/cholecystokinin type B receptor (450 aa).

The Extracellular segment spans residues 1-57 (MELLKLNSSVQGPGPGSGSSLCHPGVSLLNSSSAGNLSCEPPRIRGTGTRELELAIR). N-linked (GlcNAc...) asparagine glycans are attached at residues Asn-7, Asn-30, and Asn-36. Residues 58–79 (ITLYAVIFLMSIGGNMLIIVVL) form a helical membrane-spanning segment. The Cytoplasmic portion of the chain corresponds to 80 to 87 (GLSRRLRT). Residues 88–109 (VTNAFLLSLAVSDLLLAVACMP) form a helical membrane-spanning segment. Topologically, residues 110-131 (FTLLPNLMGTFIFGTVICKAVS) are extracellular. A disulfide bridge connects residues Cys-127 and Cys-205. Residues 132-150 (YLMGVSVSVSTLNLVAIAL) traverse the membrane as a helical segment. The Cytoplasmic portion of the chain corresponds to 151-170 (ERYSAICRPLQARVWQTRSH). The helical transmembrane segment at 171–189 (AARVILATWLLSGLLMVPY) threads the bilayer. The Extracellular portion of the chain corresponds to 190-219 (PVYTVVQPVGPRVLQCMHRWPSARVRQTWS). Residues 220 to 242 (VLLLMLLFFIPGVVMAVAYGLIS) traverse the membrane as a helical segment. The Cytoplasmic segment spans residues 243-336 (RELYLGLRFD…KLLAKKRVVR (94 aa)). A disordered region spans residues 258-277 (DTQSRVRNQGGLPGGTAPGP). Residues 337–358 (MLLVIVLLFFLCWLPIYSANTW) traverse the membrane as a helical segment. Over 359–376 (CAFDGPGAHRALSGAPIS) the chain is Extracellular. A helical transmembrane segment spans residues 377–397 (FIHLLSYASACVNPLVYCFMH). Residues 398-450 (RRFRQACLDTCARCCPRPPRARPRPLPDEDPPTPSIASLSRLSYTTISTLGPG) are Cytoplasmic-facing. Cys-411 carries the S-palmitoyl cysteine lipid modification.

Belongs to the G-protein coupled receptor 1 family. Stomach and brain.

The protein localises to the cell membrane. Receptor for gastrin and cholecystokinin. The CCK-B receptors occur throughout the central nervous system where they modulate anxiety, analgesia, arousal, and neuroleptic activity. This receptor mediates its action by association with G proteins that activate a phosphatidylinositol-calcium second messenger system. The polypeptide is Gastrin/cholecystokinin type B receptor (CCKBR) (Mastomys natalensis (African soft-furred rat)).